A 67-amino-acid polypeptide reads, in one-letter code: Guanine nucleotide-binding protein G(I)/G(S)/G(O) subunit gamma-13 (67 aa).

Position 64 is a cysteine methyl ester (Cys-64). Cys-64 carries S-farnesyl cysteine lipidation. Positions Thr-65 to Leu-67 are cleaved as a propeptide — removed in mature form.

This sequence belongs to the G protein gamma family. G proteins are composed of 3 units, alpha, beta and gamma.

It localises to the cell membrane. Functionally, guanine nucleotide-binding proteins (G proteins) are involved as a modulator or transducer in various transmembrane signaling systems. The beta and gamma chains are required for the GTPase activity, for replacement of GDP by GTP, and for G protein-effector interaction. In Mus musculus (Mouse), this protein is Guanine nucleotide-binding protein G(I)/G(S)/G(O) subunit gamma-13 (Gng13).